A 152-amino-acid polypeptide reads, in one-letter code: Probable spermine N(1)-acetyltransferase (152 aa).

Residues 3–152 (INIKAVTDDN…NGEKVMVKEL (150 aa)) enclose the N-acetyltransferase domain. Acetyl-CoA-binding positions include 82 to 84 (FFI), 89 to 95 (QGKGLGK), and 122 to 131 (NIHAIRLYQR). Y129 (proton donor) is an active-site residue.

Belongs to the acetyltransferase family.

The catalysed reaction is an alkane-alpha,omega-diamine + acetyl-CoA = an N-acetylalkane-alpha,omega-diamine + CoA + H(+). The enzyme catalyses spermine + acetyl-CoA = N(1)-acetylspermine + CoA + H(+). The protein operates within amine and polyamine degradation; spermine degradation. In terms of biological role, probably acetylates spermine to N(1)-acetylspermine. This is Probable spermine N(1)-acetyltransferase from Bacillus subtilis subsp. natto (strain BEST195).